Here is a 248-residue protein sequence, read N- to C-terminus: Ribonuclease 3 (248 aa).

The RNase III domain occupies 15-142 (LKAFFKQYHV…MIAALYLDLG (128 aa)). Residue Glu55 participates in Mg(2+) binding. Asp59 is an active-site residue. Positions 128 and 131 each coordinate Mg(2+). Glu131 is a catalytic residue. Positions 169 to 240 (DYKTELQEFL…ARDALQKLAT (72 aa)) constitute a DRBM domain.

This sequence belongs to the ribonuclease III family. As to quaternary structure, homodimer. Mg(2+) serves as cofactor.

It is found in the cytoplasm. The catalysed reaction is Endonucleolytic cleavage to 5'-phosphomonoester.. In terms of biological role, digests double-stranded RNA. Involved in the processing of primary rRNA transcript to yield the immediate precursors to the large and small rRNAs (23S and 16S). Processes some mRNAs, and tRNAs when they are encoded in the rRNA operon. Processes pre-crRNA and tracrRNA of type II CRISPR loci if present in the organism. In Spiroplasma citri, this protein is Ribonuclease 3.